The chain runs to 55 residues: MIAWALIFLAVAIAAGVLGFGGIIGAQAWIAQVLFILFLVFFLVSLLSGRKPPVT.

Helical transmembrane passes span 4-24 and 28-48; these read WALI…GGII and AWIA…SLLS.

Belongs to the UPF0391 family.

It localises to the cell membrane. The chain is UPF0391 membrane protein Sfum_0248 from Syntrophobacter fumaroxidans (strain DSM 10017 / MPOB).